The following is a 439-amino-acid chain: Serine hydroxymethyltransferase (439 aa).

127-129 (AHV) is a binding site for (6S)-5,6,7,8-tetrahydrofolate. K233 carries the post-translational modification N6-(pyridoxal phosphate)lysine.

Belongs to the SHMT family. In terms of assembly, homodimer. The cofactor is pyridoxal 5'-phosphate.

It localises to the cytoplasm. It participates in amino-acid biosynthesis; glycine biosynthesis; glycine from L-serine: step 1/1. Its function is as follows. Catalyzes the reversible interconversion of serine and glycine with a modified folate serving as the one-carbon carrier. Also exhibits a pteridine-independent aldolase activity toward beta-hydroxyamino acids, producing glycine and aldehydes, via a retro-aldol mechanism. The protein is Serine hydroxymethyltransferase of Aeropyrum pernix (strain ATCC 700893 / DSM 11879 / JCM 9820 / NBRC 100138 / K1).